We begin with the raw amino-acid sequence, 611 residues long: Urease subunit alpha 2 (611 aa).

A Urease domain is found at 154-611 (GGIDSHIHFI…LPMAQRYFLF (458 aa)). Ni(2+) contacts are provided by histidine 159, histidine 161, and lysine 242. Residue lysine 242 is modified to N6-carboxylysine. Substrate is bound at residue histidine 244. 2 residues coordinate Ni(2+): histidine 271 and histidine 297. Residue histidine 345 is the Proton donor of the active site. A Ni(2+)-binding site is contributed by aspartate 385. The tract at residues 411–434 (GHLAPDQSAKTEQSLDNIMLSPTD) is disordered. Residues 418 to 434 (SAKTEQSLDNIMLSPTD) are compositionally biased toward polar residues.

It belongs to the metallo-dependent hydrolases superfamily. Urease alpha subunit family. As to quaternary structure, heterotrimer of UreA (gamma), UreB (beta) and UreC (alpha) subunits. Three heterotrimers associate to form the active enzyme. It depends on Ni cation as a cofactor. In terms of processing, carboxylation allows a single lysine to coordinate two nickel ions.

The protein resides in the cytoplasm. It carries out the reaction urea + 2 H2O + H(+) = hydrogencarbonate + 2 NH4(+). Its pathway is nitrogen metabolism; urea degradation; CO(2) and NH(3) from urea (urease route): step 1/1. The sequence is that of Urease subunit alpha 2 from Psychrobacter cryohalolentis (strain ATCC BAA-1226 / DSM 17306 / VKM B-2378 / K5).